A 405-amino-acid chain; its full sequence is Obg-like ATPase homolog (405 aa).

An OBG-type G domain is found at 17-283 (PTSGIVGLAN…CKGIASEYFD (267 aa)). Residues 26 to 31 (NVGKST) and valine 231 contribute to the ATP site. One can recognise a TGS domain in the interval 312–398 (NLISFFTCGP…QDNDIALFKA (87 aa)).

This sequence belongs to the TRAFAC class OBG-HflX-like GTPase superfamily. OBG GTPase family.

The protein resides in the mitochondrion. In terms of biological role, hydrolyzes ATP, and can also hydrolyze GTP with lower efficiency. Has lower affinity for GTP. The polypeptide is Obg-like ATPase homolog (YLF2) (Saccharomyces cerevisiae (strain ATCC 204508 / S288c) (Baker's yeast)).